The primary structure comprises 915 residues: Isoleucine--tRNA ligase (915 aa).

The 'HIGH' region motif lies at P64–H74. An L-isoleucyl-5'-AMP-binding site is contributed by E557. Residues A598–S602 carry the 'KMSKS' region motif. ATP is bound at residue K601. Zn(2+) is bound by residues C887, C890, C902, and C905.

Belongs to the class-I aminoacyl-tRNA synthetase family. IleS type 1 subfamily. In terms of assembly, monomer. It depends on Zn(2+) as a cofactor.

The protein resides in the cytoplasm. It carries out the reaction tRNA(Ile) + L-isoleucine + ATP = L-isoleucyl-tRNA(Ile) + AMP + diphosphate. In terms of biological role, catalyzes the attachment of isoleucine to tRNA(Ile). As IleRS can inadvertently accommodate and process structurally similar amino acids such as valine, to avoid such errors it has two additional distinct tRNA(Ile)-dependent editing activities. One activity is designated as 'pretransfer' editing and involves the hydrolysis of activated Val-AMP. The other activity is designated 'posttransfer' editing and involves deacylation of mischarged Val-tRNA(Ile). In Leptospira biflexa serovar Patoc (strain Patoc 1 / ATCC 23582 / Paris), this protein is Isoleucine--tRNA ligase.